The following is a 185-amino-acid chain: MIEPLPRILVSELCKFVMAILNILRYPDERLHKIATEVPSITREIRTLVSNMAETMYAAPGIGLAATQVDVHQRIIVIDVSETRDELLVLINPEIIASSGNAETQEGCLSVPGIFDKVTRAEEVTVRATGIDGKSFEMDASGLLAVCIQHEMDHLMGKVFVEYLSPFKQSRILSKLKKQARRQIA.

2 residues coordinate Fe cation: Cys108 and His150. Glu151 is an active-site residue. His154 contacts Fe cation.

It belongs to the polypeptide deformylase family. Fe(2+) is required as a cofactor.

It carries out the reaction N-terminal N-formyl-L-methionyl-[peptide] + H2O = N-terminal L-methionyl-[peptide] + formate. Functionally, removes the formyl group from the N-terminal Met of newly synthesized proteins. Requires at least a dipeptide for an efficient rate of reaction. N-terminal L-methionine is a prerequisite for activity but the enzyme has broad specificity at other positions. This is Peptide deformylase 2 from Nitrosomonas europaea (strain ATCC 19718 / CIP 103999 / KCTC 2705 / NBRC 14298).